We begin with the raw amino-acid sequence, 1388 residues long: Dicer-like protein 2 (1388 aa).

One can recognise a Helicase ATP-binding domain in the interval 23–203 (MLEASMKENI…LLMVESNLDA (181 aa)). 36 to 43 (MDTGSGKT) is a binding site for ATP. The DEAH box motif lies at 144–147 (DEAH). The Helicase C-terminal domain occupies 368–537 (KFESLLNFLD…DDERQLQSVS (170 aa)). The Dicer dsRNA-binding fold domain occupies 564 to 658 (AMAHLHHFCA…LPLTKKPELK (95 aa)). 2 consecutive RNase III domains span residues 906–1059 (ISAI…VDGG) and 1098–1281 (NDRL…VDSG). The Mg(2+) site is built by Glu-1137, Asp-1267, and Glu-1270.

Belongs to the helicase family. Dicer subfamily. It depends on Mg(2+) as a cofactor. The cofactor is Mn(2+).

Its function is as follows. Dicer-like endonuclease involved in cleaving double-stranded RNA in the RNA interference (RNAi) pathway. Produces 21 to 25 bp dsRNAs (siRNAs) which target the selective destruction of homologous RNAs leading to sequence-specific suppression of gene expression, called post-transcriptional gene silencing (PTGS). Part of a broad host defense response against viral infection and transposons. In Aspergillus fumigatus (strain ATCC MYA-4609 / CBS 101355 / FGSC A1100 / Af293) (Neosartorya fumigata), this protein is Dicer-like protein 2 (dcl2).